A 474-amino-acid polypeptide reads, in one-letter code: Glutamate--tRNA ligase (474 aa).

A 'HIGH' region motif is present at residues 9 to 19 (PSPTGYLHVGG). Positions 240–244 (KLSKR) match the 'KMSKS' region motif. Lys-243 is an ATP binding site.

It belongs to the class-I aminoacyl-tRNA synthetase family. Glutamate--tRNA ligase type 1 subfamily. In terms of assembly, monomer.

It is found in the cytoplasm. The catalysed reaction is tRNA(Glu) + L-glutamate + ATP = L-glutamyl-tRNA(Glu) + AMP + diphosphate. Functionally, catalyzes the attachment of glutamate to tRNA(Glu) in a two-step reaction: glutamate is first activated by ATP to form Glu-AMP and then transferred to the acceptor end of tRNA(Glu). The chain is Glutamate--tRNA ligase from Vibrio cholerae serotype O1 (strain ATCC 39315 / El Tor Inaba N16961).